A 466-amino-acid chain; its full sequence is RUS family member 1 (466 aa).

A2 is subject to N-acetylalanine. A helical membrane pass occupies residues 245 to 265; sequence LLMLPLVSDCPSLSLGCFVLL.

The protein belongs to the RUS1 family.

Its subcellular location is the membrane. The polypeptide is RUS family member 1 (Mus musculus (Mouse)).